The sequence spans 430 residues: Adenylosuccinate synthetase (430 aa).

Residues 12–18 (GDEGKGK) and 40–42 (GHT) each bind GTP. Asp-13 (proton acceptor) is an active-site residue. Mg(2+) contacts are provided by Asp-13 and Gly-40. Residues 13-16 (DEGK), 38-41 (NAGH), Thr-130, Arg-144, Gln-224, Thr-239, and Arg-303 contribute to the IMP site. His-41 serves as the catalytic Proton donor. Substrate is bound at residue 299 to 305 (TNTGRAR). Residues Arg-305, 331-333 (KLD), and 413-415 (STS) each bind GTP.

This sequence belongs to the adenylosuccinate synthetase family. Homodimer. The cofactor is Mg(2+).

The protein localises to the cytoplasm. The catalysed reaction is IMP + L-aspartate + GTP = N(6)-(1,2-dicarboxyethyl)-AMP + GDP + phosphate + 2 H(+). It participates in purine metabolism; AMP biosynthesis via de novo pathway; AMP from IMP: step 1/2. Its function is as follows. Plays an important role in the de novo pathway of purine nucleotide biosynthesis. Catalyzes the first committed step in the biosynthesis of AMP from IMP. The chain is Adenylosuccinate synthetase from Hyphomonas neptunium (strain ATCC 15444).